We begin with the raw amino-acid sequence, 590 residues long: Pescadillo homolog (590 aa).

The BRCT domain maps to 332 to 422 (VCKSLFKDLK…IILPTEKYLV (91 aa)). The disordered stretch occupies residues 561–590 (AMKISQSRKRSGVEIIEQRKKRLNDTQPSS).

This sequence belongs to the pescadillo family. Interacts with BOP1 and WDR12. Interacts with NSN1. In terms of tissue distribution, expressed in shoot and root apical meristems, epidermal cells and vasculature of developing leaves, trichome progenitor cells, young flowers, developing pollen grains and ovules, and mature pollen grains.

It localises to the nucleus. It is found in the nucleolus. The protein localises to the nucleoplasm. Functionally, required for maturation of ribosomal RNAs and formation of the large ribosomal subunit. Plays an essential role in cell growth and survival through its regulation of ribosome biogenesis and mitotic progression. Required for normal root cell growth and differentiation. This Arabidopsis thaliana (Mouse-ear cress) protein is Pescadillo homolog.